The primary structure comprises 198 residues: Adenine phosphoribosyltransferase (198 aa).

This sequence belongs to the purine/pyrimidine phosphoribosyltransferase family. As to quaternary structure, homodimer.

Its subcellular location is the cytoplasm. The enzyme catalyses AMP + diphosphate = 5-phospho-alpha-D-ribose 1-diphosphate + adenine. It functions in the pathway purine metabolism; AMP biosynthesis via salvage pathway; AMP from adenine: step 1/1. Catalyzes a salvage reaction resulting in the formation of AMP, that is energically less costly than de novo synthesis. The chain is Adenine phosphoribosyltransferase from Serratia proteamaculans (strain 568).